The chain runs to 161 residues: UPF0178 protein BR1979/BS1330_I1973 (161 aa).

It belongs to the UPF0178 family.

In Brucella suis biovar 1 (strain 1330), this protein is UPF0178 protein BR1979/BS1330_I1973.